A 312-amino-acid chain; its full sequence is Protein Rep40 (312 aa).

Positions 84-239 (DPQYAASVFL…LDHDFGKVTK (156 aa)) constitute an SF3 helicase domain. Residue 110 to 117 (GPATTGKT) coordinates ATP. Residues 264 to 301 (KGGAKKRPAPSDADISEPKRVRESVAQPSTSDAEASIN) form a disordered region.

Homooligomer.

The protein localises to the host nucleus. It carries out the reaction ATP + H2O = ADP + phosphate + H(+). In terms of biological role, plays a critical role during packaging of viral DNA into empty capsids, where they are thought to be part of the packaging motor complex. The single stranded genomic DNA is packaged in a 3' to 5' direction and requires the association of viral DNA with Rep40. The protein is Protein Rep40 (Rep40) of Mammalia (AAV-2).